We begin with the raw amino-acid sequence, 226 residues long: Protein GrpE (226 aa).

Disordered regions lie at residues 1–31 and 189–226; these read MTPN…PDTL and VSKG…PAEA. Low complexity predominate over residues 192–218; sequence GGPKAAEASKPAGEAPKPAGEAPKPAG.

The protein belongs to the GrpE family. As to quaternary structure, homodimer.

The protein resides in the cytoplasm. Participates actively in the response to hyperosmotic and heat shock by preventing the aggregation of stress-denatured proteins, in association with DnaK and GrpE. It is the nucleotide exchange factor for DnaK and may function as a thermosensor. Unfolded proteins bind initially to DnaJ; upon interaction with the DnaJ-bound protein, DnaK hydrolyzes its bound ATP, resulting in the formation of a stable complex. GrpE releases ADP from DnaK; ATP binding to DnaK triggers the release of the substrate protein, thus completing the reaction cycle. Several rounds of ATP-dependent interactions between DnaJ, DnaK and GrpE are required for fully efficient folding. This chain is Protein GrpE, found in Methylobacterium nodulans (strain LMG 21967 / CNCM I-2342 / ORS 2060).